We begin with the raw amino-acid sequence, 116 residues long: Ribosome-binding factor A (116 aa).

Belongs to the RbfA family. In terms of assembly, monomer. Binds 30S ribosomal subunits, but not 50S ribosomal subunits or 70S ribosomes.

Its subcellular location is the cytoplasm. In terms of biological role, one of several proteins that assist in the late maturation steps of the functional core of the 30S ribosomal subunit. Associates with free 30S ribosomal subunits (but not with 30S subunits that are part of 70S ribosomes or polysomes). Required for efficient processing of 16S rRNA. May interact with the 5'-terminal helix region of 16S rRNA. The chain is Ribosome-binding factor A from Staphylococcus aureus (strain JH9).